The primary structure comprises 229 residues: 2-C-methyl-D-erythritol 4-phosphate cytidylyltransferase (229 aa).

Belongs to the IspD/TarI cytidylyltransferase family. IspD subfamily.

It catalyses the reaction 2-C-methyl-D-erythritol 4-phosphate + CTP + H(+) = 4-CDP-2-C-methyl-D-erythritol + diphosphate. It functions in the pathway isoprenoid biosynthesis; isopentenyl diphosphate biosynthesis via DXP pathway; isopentenyl diphosphate from 1-deoxy-D-xylulose 5-phosphate: step 2/6. Functionally, catalyzes the formation of 4-diphosphocytidyl-2-C-methyl-D-erythritol from CTP and 2-C-methyl-D-erythritol 4-phosphate (MEP). This chain is 2-C-methyl-D-erythritol 4-phosphate cytidylyltransferase, found in Neisseria meningitidis serogroup C / serotype 2a (strain ATCC 700532 / DSM 15464 / FAM18).